A 186-amino-acid chain; its full sequence is Adenine phosphoribosyltransferase (186 aa).

132 to 136 (ATGGS) contributes to the AMP binding site.

Belongs to the purine/pyrimidine phosphoribosyltransferase family. In terms of assembly, homodimer. The cofactor is Mg(2+).

The protein localises to the cytoplasm. Its subcellular location is the nucleus. The catalysed reaction is AMP + diphosphate = 5-phospho-alpha-D-ribose 1-diphosphate + adenine. It participates in purine metabolism; AMP biosynthesis via salvage pathway; AMP from adenine: step 1/1. Functionally, catalyzes a salvage reaction resulting in the formation of AMP, that is energically less costly than de novo synthesis. This chain is Adenine phosphoribosyltransferase (APT1), found in Debaryomyces hansenii (strain ATCC 36239 / CBS 767 / BCRC 21394 / JCM 1990 / NBRC 0083 / IGC 2968) (Yeast).